A 493-amino-acid polypeptide reads, in one-letter code: GTPase Der (493 aa).

EngA-type G domains are found at residues 3–166 and 207–380; these read PVVA…SGKG and LKLA…DCAT. Residues 9-16, 56-60, 118-121, 213-220, 260-264, and 325-328 contribute to the GTP site; these read GRPNVGKS, DTGGI, NKTD, GKPNVGKS, DTAGV, and NKWD. Positions 381 to 465 constitute a KH-like domain; sequence RRVNTSLLTR…PIRIQFKEGA (85 aa).

The protein belongs to the TRAFAC class TrmE-Era-EngA-EngB-Septin-like GTPase superfamily. EngA (Der) GTPase family. Associates with the 50S ribosomal subunit.

Functionally, GTPase that plays an essential role in the late steps of ribosome biogenesis. This chain is GTPase Der, found in Photorhabdus laumondii subsp. laumondii (strain DSM 15139 / CIP 105565 / TT01) (Photorhabdus luminescens subsp. laumondii).